The sequence spans 111 residues: Phosphoribosyl-ATP pyrophosphatase (111 aa).

This sequence belongs to the PRA-PH family.

Its subcellular location is the cytoplasm. It carries out the reaction 1-(5-phospho-beta-D-ribosyl)-ATP + H2O = 1-(5-phospho-beta-D-ribosyl)-5'-AMP + diphosphate + H(+). The protein operates within amino-acid biosynthesis; L-histidine biosynthesis; L-histidine from 5-phospho-alpha-D-ribose 1-diphosphate: step 2/9. In Ectopseudomonas mendocina (strain ymp) (Pseudomonas mendocina), this protein is Phosphoribosyl-ATP pyrophosphatase.